A 147-amino-acid polypeptide reads, in one-letter code: Hemoglobin subunit gamma (147 aa).

Residues histidine 3–histidine 147 form the Globin domain. Heme b contacts are provided by histidine 64 and histidine 93.

It belongs to the globin family. In terms of assembly, heterotetramer of two alpha chains and two gamma chains in fetal hemoglobin (Hb F). In terms of tissue distribution, red blood cells.

Functionally, gamma chains make up the fetal hemoglobin F, in combination with alpha chains. This is Hemoglobin subunit gamma (HBG) from Cephalopachus bancanus (Western tarsier).